The chain runs to 660 residues: UPF0603 protein MT2410 (660 aa).

Residues 1–26 (MRLVRLLGMVLTILAAGLLLGPPAGA) form the signal peptide. A helical transmembrane segment spans residues 162 to 182 (VVLLVTVGIIVIVVAVLLVVM). A coiled-coil region spans residues 488–567 (DQLTKVDADL…LEAAHDRKSS (80 aa)). Residues 605–625 (GGNNAGAILGGIIIGDLLSGG) traverse the membrane as a helical segment. Residues 638-660 (FGGSSNAPGSSPDGGFLGGGGRF) are disordered.

Belongs to the UPF0603 family.

The protein resides in the cell membrane. May play a role in septum formation. The polypeptide is UPF0603 protein MT2410 (Mycobacterium tuberculosis (strain CDC 1551 / Oshkosh)).